A 178-amino-acid polypeptide reads, in one-letter code: Meiotically up-regulated gene 95 protein (178 aa).

Residues 1–12 are Cytoplasmic-facing; it reads MNLFVYIAQNPT. The chain crosses the membrane as a helical; Signal-anchor for type II membrane protein span at residues 13–30; that stretch reads LTKWFFCCVCTILTMPFF. Topologically, residues 31–178 are lumenal; it reads KKPYRKRGIS…ESIEKPENDN (148 aa).

The protein resides in the endoplasmic reticulum membrane. Has a role in meiosis. The sequence is that of Meiotically up-regulated gene 95 protein (mug95) from Schizosaccharomyces pombe (strain 972 / ATCC 24843) (Fission yeast).